The sequence spans 409 residues: Multidrug resistance protein MdtG (409 aa).

Helical transmembrane passes span 16-36 (LIVA…VMPF), 58-78 (IVFS…GGLA), 92-112 (LGMG…QFLI), 115-135 (ALLG…ATQV), 146-166 (TLST…GLLA), 173-193 (PVFF…LFCI), 224-244 (LFVT…ILTL), 256-276 (VAFI…LLSA), 291-311 (ILIT…YVQT), and 379-399 (AVFL…WNSL).

Belongs to the major facilitator superfamily. DHA1 family. MdtG (TC 2.A.1.2.20) subfamily.

It localises to the cell inner membrane. Confers resistance to fosfomycin and deoxycholate. The chain is Multidrug resistance protein MdtG from Escherichia coli O9:H4 (strain HS).